The sequence spans 611 residues: MNQDVRVFPDSIYLSCSKKKASLRIDRVDGCLSLSNSLDLSKTPDYNNVQLYGFIRLKIYKYVVLVTSCDLHAAILGNNIYRARKFAIFPITRTLPFSTGLLNIKDEEELHYISLLNKHLSKGQILFSPTLDLTCSLQRLRVLTQSFELTSKYNYRFFWNKYAFHELIELTNKDLGFQEWIQPMIQGNIAITNSFLKTYNLRLCVITRHSPDYAGTRYFTRGVNAQGSAANFNEIEQIIMIESPITLEEQMVLSFTQIRGSIPMFWAEVNDLHYRPLLSLQPLDYSETVFGKHFQELANDYGDNLVVVNLLDQKGREAPLRSGFEKLCKRNKNPPLSYVYYDYHKQGSRNLPLFLAEIQSLLIEGKYYAEHGSKTTAMQTNFVRTNCMDCLDRTNVIQTSIAQFILNMQLHDIGVLSSSESLEEYDSFLQDFRLIWANTGDYISDLYTGTPALKGDVTRHGTRTIFGAFKDLLNCFRRYILNNFFDGMLQDSYDLGLGVFRPYDSLSIPDLPLRFHWTRFVAPGIFLFTTIILTIQELFGNPSLFCRLLYSIPMVNAGIYLYFHRRQYVNWPRLVLPTYAKGGWFSFRNHFRNITLKVFRFLRSGSFKKSV.

Residues 51-351 (LYGFIRLKIY…DYHKQGSRNL (301 aa)) form the SAC domain.

This sequence to yeast RSD1 and S.pombe SpBC19F5.03.

This is an uncharacterized protein from Schizosaccharomyces pombe (strain 972 / ATCC 24843) (Fission yeast).